Here is a 320-residue protein sequence, read N- to C-terminus: Zinc finger protein 330 (320 aa).

The interval 1–23 is disordered; sequence MPKKKTGARKKAENRREREKQLR. The Nuclear localization signal motif lies at 3 to 11; that stretch reads KKKTGARKK. Residues 10–22 are compositionally biased toward basic and acidic residues; sequence KKAENRREREKQL. 4 consecutive C4-type zinc fingers follow at residues 42–58, 67–104, 129–149, and 175–189; these read CDKC…CYFC, CAQC…CDFC, CVEC…CSFC, and CVSC…CLRC. A disordered region spans residues 206-320; sequence EKGKQPPCPK…GYAHYEEQEN (115 aa). A compositionally biased stretch (basic and acidic residues) spans 216–225; it reads CGHETQETKD. The span at 269–285 shows a compositional bias: acidic residues; that stretch reads DEEEDEYEAEDDEEEED. The residue at position 291 (serine 291) is a Phosphoserine.

It belongs to the NOA36 family. In terms of tissue distribution, widely expressed. Higher expression seen in heart and skeletal muscle.

It localises to the nucleus. It is found in the nucleolus. The protein resides in the chromosome. Its subcellular location is the centromere. The chain is Zinc finger protein 330 (ZNF330) from Homo sapiens (Human).